Consider the following 474-residue polypeptide: tRNA-2-methylthio-N(6)-dimethylallyladenosine synthase (474 aa).

One can recognise an MTTase N-terminal domain in the interval 3-120; sequence KKLHIKTWGC…LPEMINAVRG (118 aa). 6 residues coordinate [4Fe-4S] cluster: C12, C49, C83, C157, C161, and C164. Positions 143–375 constitute a Radical SAM core domain; sequence RADGPTAFVS…QERINQQAMA (233 aa). One can recognise a TRAM domain in the interval 378-441; it reads RRMLGTVQRI…TNSLRGKIVR (64 aa).

It belongs to the methylthiotransferase family. MiaB subfamily. In terms of assembly, monomer. It depends on [4Fe-4S] cluster as a cofactor.

The protein localises to the cytoplasm. It carries out the reaction N(6)-dimethylallyladenosine(37) in tRNA + (sulfur carrier)-SH + AH2 + 2 S-adenosyl-L-methionine = 2-methylsulfanyl-N(6)-dimethylallyladenosine(37) in tRNA + (sulfur carrier)-H + 5'-deoxyadenosine + L-methionine + A + S-adenosyl-L-homocysteine + 2 H(+). In terms of biological role, catalyzes the methylthiolation of N6-(dimethylallyl)adenosine (i(6)A), leading to the formation of 2-methylthio-N6-(dimethylallyl)adenosine (ms(2)i(6)A) at position 37 in tRNAs that read codons beginning with uridine. This Klebsiella pneumoniae (strain 342) protein is tRNA-2-methylthio-N(6)-dimethylallyladenosine synthase.